Here is a 604-residue protein sequence, read N- to C-terminus: uncharacterized protein (604 aa).

The ABC transmembrane type-1 domain maps to 49-332 (LILVMLMVVI…LANQFNTMLS (284 aa)). 4 helical membrane-spanning segments follow: residues 50–70 (ILVM…PFVI), 86–106 (LIPV…SLWF), 172–192 (VITF…LTLI), and 288–308 (IAAI…SIVV). The 235-residue stretch at 366–600 (IEFRDVSFGY…KGFYSDLYES (235 aa)) folds into the ABC transporter domain. 399-406 (GPTGAGKT) is a binding site for ATP. Residues 510–530 (LISIARAVLADPVLLILDEAT) form a helical membrane-spanning segment.

The protein belongs to the ABC transporter superfamily.

It localises to the cell membrane. This is an uncharacterized protein from Bacillus subtilis (strain 168).